A 264-amino-acid polypeptide reads, in one-letter code: NFAT activation molecule 1 (264 aa).

The N-terminal stretch at 1-37 (MESWLLRRGARVRCLHPPSWLPAWCFLCLLPVPQTLQ) is a signal peptide. Over 38–159 (LTGLVSLTHT…QPPAFKVQEA (122 aa)) the chain is Extracellular. The 97-residue stretch at 49-145 (LPIMVSLANT…QSDGVVILVR (97 aa)) folds into the Ig-like V-type domain. A disulfide bridge connects residues Cys64 and Cys110. N-linked (GlcNAc...) asparagine glycosylation is found at Asn105 and Asn118. Residues 160 to 180 (LMLGFTSLMSVLGVLGTALLL) form a helical membrane-spanning segment. Topologically, residues 181–264 (WKKKQISVLG…NEFNLVYENL (84 aa)) are cytoplasmic. The ITAM domain maps to 212 to 232 (ESVYTSLQRRETEVYACMKEE). Phosphotyrosine is present on residues Tyr215 and Tyr226.

As to quaternary structure, no direct interaction with the B-cell antigen receptor (BCR). Interacts with SYK; probably involved in BCR signaling. Interacts with ZAP70. N-glycosylated. In terms of tissue distribution, highly expressed in the spleen, expressed by both B- and CD4+ and CD8+ T-cells, as well as non-T- and non-B-cells, including macrophages and neutrophils. Expressed at low levels, if any, in non-immune tissue.

It is found in the cell membrane. Its function is as follows. May function in immune system as a receptor which activates via the calcineurin/NFAT-signaling pathway the downstream cytokine gene promoters. Activates the transcription of IL-13 and TNF-alpha promoters. May be involved in the regulation of B-cell, but not T-cell, development. In Mus musculus (Mouse), this protein is NFAT activation molecule 1 (Nfam1).